The chain runs to 218 residues: Octanoyltransferase (218 aa).

One can recognise a BPL/LPL catalytic domain in the interval 31-206 (REAADEVWLV…QLVKHLDYAE (176 aa)). Substrate contacts are provided by residues 70-77 (RGGQVTYH), 137-139 (SLG), and 150-152 (GLA). Cys168 serves as the catalytic Acyl-thioester intermediate.

The protein belongs to the LipB family.

It is found in the cytoplasm. It catalyses the reaction octanoyl-[ACP] + L-lysyl-[protein] = N(6)-octanoyl-L-lysyl-[protein] + holo-[ACP] + H(+). It functions in the pathway protein modification; protein lipoylation via endogenous pathway; protein N(6)-(lipoyl)lysine from octanoyl-[acyl-carrier-protein]: step 1/2. Catalyzes the transfer of endogenously produced octanoic acid from octanoyl-acyl-carrier-protein onto the lipoyl domains of lipoate-dependent enzymes. Lipoyl-ACP can also act as a substrate although octanoyl-ACP is likely to be the physiological substrate. The chain is Octanoyltransferase from Pseudomonas savastanoi pv. phaseolicola (strain 1448A / Race 6) (Pseudomonas syringae pv. phaseolicola (strain 1448A / Race 6)).